The chain runs to 225 residues: Octanoyltransferase (225 aa).

Residues 44-219 enclose the BPL/LPL catalytic domain; sequence RETPDEIWLL…NFIAQLTHRI (176 aa). Substrate is bound by residues 83–90, 150–152, and 163–165; these read RGGQITYH, SLG, and GIA. Cys-181 functions as the Acyl-thioester intermediate in the catalytic mechanism.

The protein belongs to the LipB family.

It localises to the cytoplasm. It carries out the reaction octanoyl-[ACP] + L-lysyl-[protein] = N(6)-octanoyl-L-lysyl-[protein] + holo-[ACP] + H(+). It participates in protein modification; protein lipoylation via endogenous pathway; protein N(6)-(lipoyl)lysine from octanoyl-[acyl-carrier-protein]: step 1/2. Its function is as follows. Catalyzes the transfer of endogenously produced octanoic acid from octanoyl-acyl-carrier-protein onto the lipoyl domains of lipoate-dependent enzymes. Lipoyl-ACP can also act as a substrate although octanoyl-ACP is likely to be the physiological substrate. The polypeptide is Octanoyltransferase (Nitrosomonas eutropha (strain DSM 101675 / C91 / Nm57)).